Here is an 859-residue protein sequence, read N- to C-terminus: Protein EFR3 homolog (859 aa).

Positions 696 to 714 are enriched in polar residues; sequence RKNDGSGDQWQNDTPNFDS. Residues 696–728 are disordered; that stretch reads RKNDGSGDQWQNDTPNFDSTDGRESPSGYKTVG.

It belongs to the EFR3 family.

This Caenorhabditis elegans protein is Protein EFR3 homolog.